Here is a 492-residue protein sequence, read N- to C-terminus: Ketol-acid reductoisomerase (NADP(+)) (492 aa).

The KARI N-terminal Rossmann domain occupies 15–208 (AQLGQCRFMD…GGDRAGVLQS (194 aa)). Residues 45–48 (CGAQ), arginine 68, arginine 76, serine 78, and 108–110 (DKQ) contribute to the NADP(+) site. The active site involves histidine 132. Glycine 158 serves as a coordination point for NADP(+). 2 KARI C-terminal knotted domains span residues 209–353 (SFIA…DEQT) and 354–486 (YFDK…MTDM). 4 residues coordinate Mg(2+): aspartate 217, glutamate 221, glutamate 389, and glutamate 393. Serine 414 contributes to the substrate binding site.

The protein belongs to the ketol-acid reductoisomerase family. Mg(2+) serves as cofactor.

It carries out the reaction (2R)-2,3-dihydroxy-3-methylbutanoate + NADP(+) = (2S)-2-acetolactate + NADPH + H(+). The enzyme catalyses (2R,3R)-2,3-dihydroxy-3-methylpentanoate + NADP(+) = (S)-2-ethyl-2-hydroxy-3-oxobutanoate + NADPH + H(+). The protein operates within amino-acid biosynthesis; L-isoleucine biosynthesis; L-isoleucine from 2-oxobutanoate: step 2/4. It participates in amino-acid biosynthesis; L-valine biosynthesis; L-valine from pyruvate: step 2/4. Involved in the biosynthesis of branched-chain amino acids (BCAA). Catalyzes an alkyl-migration followed by a ketol-acid reduction of (S)-2-acetolactate (S2AL) to yield (R)-2,3-dihydroxy-isovalerate. In the isomerase reaction, S2AL is rearranged via a Mg-dependent methyl migration to produce 3-hydroxy-3-methyl-2-ketobutyrate (HMKB). In the reductase reaction, this 2-ketoacid undergoes a metal-dependent reduction by NADPH to yield (R)-2,3-dihydroxy-isovalerate. This chain is Ketol-acid reductoisomerase (NADP(+)), found in Shewanella oneidensis (strain ATCC 700550 / JCM 31522 / CIP 106686 / LMG 19005 / NCIMB 14063 / MR-1).